Consider the following 321-residue polypeptide: Cytochrome c biogenesis protein CcsA (321 aa).

The next 7 helical transmembrane spans lie at 9 to 29, 44 to 64, 68 to 88, 143 to 163, 226 to 246, 260 to 274, and 289 to 309; these read ILTHISFSTISIVITIHLITL, GMIATFFCITGFLVSRWASSG, LSNLYESLIFLSWALYILHMI, MLLSYATLLCGSLLSAALLMI, VISLGFTLLTIGILCGAVWAN, TWAFITWTIFAIYLH, and VASIGFLIIWICYFGINLLGI.

The protein belongs to the CcmF/CycK/Ccl1/NrfE/CcsA family. As to quaternary structure, may interact with Ccs1.

The protein resides in the plastid. It localises to the chloroplast thylakoid membrane. Its function is as follows. Required during biogenesis of c-type cytochromes (cytochrome c6 and cytochrome f) at the step of heme attachment. This Oryza sativa subsp. indica (Rice) protein is Cytochrome c biogenesis protein CcsA.